We begin with the raw amino-acid sequence, 170 residues long: uncharacterized protein (170 aa).

Residues 1 to 15 (MFLTSPFESCIVLSS) are Cytoplasmic-facing. A helical membrane pass occupies residues 16-36 (LIAGLLFSLSTGFVGILGVFA). At 37 to 76 (SLFETELSVSPKRLSLSSLSWPKTFWALLSSVEGVSWESS) the chain is on the extracellular side. A helical transmembrane segment spans residues 77–97 (LFACIVGCCFAVTVIASLSAS). At 98–119 (RVFGTVASSFRDSSCCCDSSPA) the chain is on the cytoplasmic side. Residues 120–140 (VSVLATPATAALALLSLLLSL) traverse the membrane as a helical segment. Residues 141-170 (PCWSTSTEAFTVDPSPSVFSMLANRITIGL) are Extracellular-facing.

It is found in the membrane. This is an uncharacterized protein from Saccharomyces cerevisiae (strain ATCC 204508 / S288c) (Baker's yeast).